The primary structure comprises 470 residues: Cysteine--tRNA ligase (470 aa).

Cys31 contacts Zn(2+). The 'HIGH' region signature appears at 33–43 (PTVYDYVHIGH). 3 residues coordinate Zn(2+): Cys209, His234, and Glu238. Residues 266–270 (KMSKS) carry the 'KMSKS' region motif. Lys269 provides a ligand contact to ATP.

Belongs to the class-I aminoacyl-tRNA synthetase family. Zn(2+) is required as a cofactor.

Its subcellular location is the cytoplasm. It carries out the reaction tRNA(Cys) + L-cysteine + ATP = L-cysteinyl-tRNA(Cys) + AMP + diphosphate. In Saccharolobus solfataricus (strain ATCC 35092 / DSM 1617 / JCM 11322 / P2) (Sulfolobus solfataricus), this protein is Cysteine--tRNA ligase.